Reading from the N-terminus, the 476-residue chain is ATP synthase subunit beta, chloroplastic (476 aa).

153 to 160 (GGAGVGKT) is a binding site for ATP.

Belongs to the ATPase alpha/beta chains family. F-type ATPases have 2 components, CF(1) - the catalytic core - and CF(0) - the membrane proton channel. CF(1) has five subunits: alpha(3), beta(3), gamma(1), delta(1), epsilon(1). CF(0) has four main subunits: a(1), b(1), b'(1) and c(9-12).

The protein resides in the plastid. The protein localises to the chloroplast thylakoid membrane. It carries out the reaction ATP + H2O + 4 H(+)(in) = ADP + phosphate + 5 H(+)(out). Functionally, produces ATP from ADP in the presence of a proton gradient across the membrane. The catalytic sites are hosted primarily by the beta subunits. This is ATP synthase subunit beta, chloroplastic from Dicksonia antarctica (Australian tree fern).